A 565-amino-acid polypeptide reads, in one-letter code: Heme/hemopexin transporter protein HuxB (565 aa).

The signal sequence occupies residues 1-26; it reads MKMRPRYSVIASAVSLGFVLSKSVMA. Positions 73–150 constitute a POTRA domain; it reads FPLTQVQILD…GTVKILLLKG (78 aa).

Belongs to the TPS (TC 1.B.20) family.

The protein localises to the cell outer membrane. Functionally, likely functions in the release of soluble HxuA from the cell. In terms of biological role, probable member of a two partner secretion pathway (TPS) in which it mediates the secretion of HuxA. The protein is Heme/hemopexin transporter protein HuxB (hxuB) of Haemophilus influenzae (strain 86-028NP).